The primary structure comprises 829 residues: Periplasmic nitrate reductase (829 aa).

Residues 1 to 29 constitute a signal peptide (tat-type signal); the sequence is MKMTRRAFVKANAAASAAAVAGVTLPASA. The 57-residue stretch at 41–97 folds into the 4Fe-4S Mo/W bis-MGD-type domain; the sequence is IKWDKAPCRFCGTGCSVLVGTQNGRVVATQGDPEAPVNKGLNCIKGYFLSKIMYGKD. Positions 48, 51, 55, and 83 each coordinate [4Fe-4S] cluster. Mo-bis(molybdopterin guanine dinucleotide) contacts are provided by residues Lys-85, Gln-152, Asn-177, Cys-181, 214–221, 245–249, 264–266, Met-374, Gln-378, Asn-484, 510–511, Lys-533, Asp-560, and 718–727; these read WGSNMAEM, STYYH, QSD, SD, and TGRVLEHWHT. Substrate is bound at residue Phe-794. Mo-bis(molybdopterin guanine dinucleotide) is bound by residues Asn-802 and Lys-819.

It belongs to the prokaryotic molybdopterin-containing oxidoreductase family. NasA/NapA/NarB subfamily. As to quaternary structure, component of the periplasmic nitrate reductase NapAB complex composed of NapA and NapB. Requires [4Fe-4S] cluster as cofactor. The cofactor is Mo-bis(molybdopterin guanine dinucleotide). In terms of processing, predicted to be exported by the Tat system. The position of the signal peptide cleavage has not been experimentally proven.

It localises to the periplasm. The enzyme catalyses 2 Fe(II)-[cytochrome] + nitrate + 2 H(+) = 2 Fe(III)-[cytochrome] + nitrite + H2O. In terms of biological role, catalytic subunit of the periplasmic nitrate reductase complex NapAB. Receives electrons from NapB and catalyzes the reduction of nitrate to nitrite. This Aliivibrio fischeri (strain ATCC 700601 / ES114) (Vibrio fischeri) protein is Periplasmic nitrate reductase.